A 229-amino-acid polypeptide reads, in one-letter code: MAKLTKRMKAIKAGVDSTKQYEINEAITVLKQFTSTKFVESVDVAVNLGIDARKSDQNVRGATVLPHGTGRSVRVAVFTQGANVDSAKAAGADLVGMEDLAEQIKKGEMNFDVVIASPDAMRVVGQLGQILGPRGLMPNPKVGTVTPNVAEAVKNAKSGQIRYRNDKNGIIHTTIGKANFSAEQLKENLQALLAALTKAKPATAKGIFIRKVSVSTTQGAGVAVDQSSL.

Belongs to the universal ribosomal protein uL1 family. As to quaternary structure, part of the 50S ribosomal subunit.

Its function is as follows. Binds directly to 23S rRNA. The L1 stalk is quite mobile in the ribosome, and is involved in E site tRNA release. Protein L1 is also a translational repressor protein, it controls the translation of the L11 operon by binding to its mRNA. This is Large ribosomal subunit protein uL1 from Histophilus somni (strain 2336) (Haemophilus somnus).